Consider the following 171-residue polypeptide: Small ribosomal subunit protein uS5 (171 aa).

In terms of domain architecture, S5 DRBM spans 15–78 (LKDRLVAINR…EAAKKNLTRV (64 aa)).

The protein belongs to the universal ribosomal protein uS5 family. In terms of assembly, part of the 30S ribosomal subunit. Contacts proteins S4 and S8.

With S4 and S12 plays an important role in translational accuracy. In terms of biological role, located at the back of the 30S subunit body where it stabilizes the conformation of the head with respect to the body. The protein is Small ribosomal subunit protein uS5 of Phocaeicola vulgatus (strain ATCC 8482 / DSM 1447 / JCM 5826 / CCUG 4940 / NBRC 14291 / NCTC 11154) (Bacteroides vulgatus).